The following is a 565-amino-acid chain: Ubiquitin carboxyl-terminal hydrolase 21 (565 aa).

The span at 1–14 (MPQASEHRLGRTRE) shows a compositional bias: basic and acidic residues. The tract at residues 1 to 103 (MPQASEHRLG…PPPTVALPLP (103 aa)) is disordered. Positions 48–57 (MLRPLPPRPG) are enriched in pro residues. Over residues 58–70 (LPDERLKKLELGR) the composition is skewed to basic and acidic residues. The Nuclear export signal motif lies at 134–152 (ELGAALSRLALRPEPPTLR). Residues 212–558 (VGLRNLGNTC…EGYVLFYQLM (347 aa)) enclose the USP domain. Residue cysteine 221 is the Nucleophile of the active site. Zn(2+)-binding residues include cysteine 384, cysteine 387, cysteine 437, and cysteine 440. Residue histidine 518 is the Proton acceptor of the active site.

Belongs to the peptidase C19 family. USP21 subfamily. As to quaternary structure, interacts with BEND3. Highly expressed in heart, pancreas and skeletal muscle. Also expressed in brain, placenta, liver and kidney, and at very low level in lung.

The protein localises to the cytoplasm. Its subcellular location is the nucleus. The enzyme catalyses Thiol-dependent hydrolysis of ester, thioester, amide, peptide and isopeptide bonds formed by the C-terminal Gly of ubiquitin (a 76-residue protein attached to proteins as an intracellular targeting signal).. Its function is as follows. Deubiquitinates histone H2A, a specific tag for epigenetic transcriptional repression, thereby acting as a coactivator. Deubiquitination of histone H2A releaves the repression of di- and trimethylation of histone H3 at 'Lys-4', resulting in regulation of transcriptional initiation. Regulates gene expression via histone H2A deubiquitination. Deubiquitinates BAZ2A/TIP5 leading to its stabilization. Also capable of removing NEDD8 from NEDD8 conjugates but has no effect on Sentrin-1 conjugates. Also acts as a negative regulator of the ribosome quality control (RQC) by mediating deubiquitination of 40S ribosomal proteins RPS10/eS10 and RPS20/uS10, thereby antagonizing ZNF598-mediated 40S ubiquitination. The chain is Ubiquitin carboxyl-terminal hydrolase 21 from Homo sapiens (Human).